Consider the following 102-residue polypeptide: Protein ORF28 (102 aa).

The chain crosses the membrane as a helical span at residues 28 to 48 (VIGLITVLFLLVIGACVYCCI).

The protein localises to the host membrane. In Homo sapiens (Human), this protein is Protein ORF28 (ORF28).